Here is a 203-residue protein sequence, read N- to C-terminus: Outer-membrane lipoprotein carrier protein (203 aa).

A signal peptide spans methionine 1 to alanine 21.

Belongs to the LolA family. As to quaternary structure, monomer.

It is found in the periplasm. In terms of biological role, participates in the translocation of lipoproteins from the inner membrane to the outer membrane. Only forms a complex with a lipoprotein if the residue after the N-terminal Cys is not an aspartate (The Asp acts as a targeting signal to indicate that the lipoprotein should stay in the inner membrane). The protein is Outer-membrane lipoprotein carrier protein of Klebsiella pneumoniae subsp. pneumoniae (strain ATCC 700721 / MGH 78578).